A 114-amino-acid polypeptide reads, in one-letter code: Iron-sulfur cluster insertion protein ErpA (114 aa).

Residues C42, C106, and C108 each contribute to the iron-sulfur cluster site.

It belongs to the HesB/IscA family. In terms of assembly, homodimer. Iron-sulfur cluster serves as cofactor.

Functionally, required for insertion of 4Fe-4S clusters for at least IspG. This is Iron-sulfur cluster insertion protein ErpA from Edwardsiella ictaluri (strain 93-146).